The chain runs to 938 residues: Glutamate receptor ionotropic, NMDA 1 (938 aa).

Residues 1–18 form the signal peptide; that stretch reads MSTMHLLTFALLFSCSFA. Residues 19–559 lie on the Extracellular side of the membrane; the sequence is RAACDPKIVN…TLDSFMQPFQ (541 aa). N-linked (GlcNAc...) asparagine glycans are attached at residues Asn-61, Asn-203, Asn-239, Asn-276, Asn-300, Asn-350, Asn-368, Asn-440, Asn-471, and Asn-491. An intrachain disulfide couples Cys-79 to Cys-308. 2 cysteine pairs are disulfide-bonded: Cys-420/Cys-454 and Cys-436/Cys-455. Glycine contacts are provided by Pro-516, Thr-518, and Arg-523. Residues 560–580 form a helical membrane-spanning segment; that stretch reads STLWLLVGLSVHVVAVMLYLL. The Cytoplasmic portion of the chain corresponds to 581–602; that stretch reads DRFSPFGRFKVNSEEEEEDALT. An intramembrane region (discontinuously helical) is located at residues 603-624; the sequence is LSSAMWFSWGVLLNSGIGEGAP. A pore-forming region spans residues 603-624; it reads LSSAMWFSWGVLLNSGIGEGAP. Over 625 to 630 the chain is Cytoplasmic; it reads RSFSAR. The chain crosses the membrane as a helical span at residues 631–647; it reads ILGMVWAGFAMIIVASY. Residues 648–812 are Extracellular-facing; that stretch reads TANLAAFLVL…NAPATLTFEN (165 aa). Residue Asn-674 is glycosylated (N-linked (GlcNAc...) asparagine). Glycine is bound by residues Ser-688 and Asp-732. Cys-744 and Cys-798 form a disulfide bridge. The N-linked (GlcNAc...) asparagine glycan is linked to Asn-771. The helical transmembrane segment at 813-833 threads the bilayer; that stretch reads MAGVFMLVAGGIVAGIFLIFI. Residues 834–938 are Cytoplasmic-facing; the sequence is EIAYKRHKDA…LQLCSRHRES (105 aa). Ser-889 is subject to Phosphoserine; by PKC. Residues 889–938 form a disordered region; the sequence is SSFKRRRSSKDTSTGGGRGALQNQKDTVLPRRAIEREEGQLQLCSRHRES. Position 890 is a phosphoserine (Ser-890). Residues Ser-896 and Ser-897 each carry the phosphoserine; by PKC modification. Residues 916–927 show a composition bias toward basic and acidic residues; that stretch reads VLPRRAIEREEG.

It belongs to the glutamate-gated ion channel (TC 1.A.10.1) family. NR1/GRIN1 subfamily. In terms of assembly, heterotetramer; the NMDAR subunits are modular and harbor tiered domains that function in concert to regulate opening and closing of the cation-selective ion channel pore. Forms heterotetrameric channels composed of two GluN1/zeta subunits (GRIN1), and two identical GluN2/epsilon subunits (GRIN2A, GRIN2B, GRIN2C or GRIN2D) or GluN3 subunits (GRIN3A or GRIN3B) (in vitro). Can also form heterotetrameric channels that contain at least two GluN1 subunits and at least two different GluN2 subunits (or a combination of one GluN2 and one GluN3 subunits) (in vitro). In vivo, the subunit composition may vary in function of the expression levels of the different subunits. Found in a complex with GRIN2A or GRIN2B, GRIN3A and PPP2CB. Found in a complex with GRIN2A or GRIN2B and GRIN3B. Interacts with SNX27 (via PDZ domain); the interaction is required for recycling to the plasma membrane when endocytosed and prevent degradation in lysosomes. Interacts with DLG4 and MPDZ. Interacts with LRFN1 and LRFN2. Interacts with MYZAP. Found in a complex with DLG4 and PRR7. Found in a complex with GRIN2B and PRR7. Interacts with PRR7; the interaction is reduced following NMDA receptor activity. Post-translationally, NMDA is probably regulated by C-terminal phosphorylation of an isoform of GRIN1 by PKC. Dephosphorylated on Ser-897 probably by protein phosphatase 2A (PPP2CB). Its phosphorylated state is influenced by the formation of the NMDAR-PPP2CB complex and the NMDAR channel activity. Detected in brain (at protein level). Detected in brain.

It localises to the cell membrane. It is found in the postsynaptic cell membrane. The protein resides in the postsynaptic density membrane. Its subcellular location is the synaptic cell membrane. The catalysed reaction is Ca(2+)(in) = Ca(2+)(out). The enzyme catalyses Na(+)(in) = Na(+)(out). It catalyses the reaction K(+)(in) = K(+)(out). Its function is as follows. Component of N-methyl-D-aspartate (NMDA) receptors (NMDARs) that function as heterotetrameric, ligand-gated cation channels with high calcium permeability and voltage-dependent block by Mg(2+). NMDARs participate in synaptic plasticity for learning and memory formation by contributing to the long-term potentiation (LTP). Channel activation requires binding of the neurotransmitter L-glutamate to the GluN2 subunit, glycine or D-serine binding to the GluN1 subunit, plus membrane depolarization to eliminate channel inhibition by Mg(2+). NMDARs mediate simultaneously the potasium efflux and the influx of calcium and sodium. Each GluN2 or GluN3 subunit confers differential attributes to channel properties, including activation, deactivation and desensitization kinetics, pH sensitivity, Ca2(+) permeability, and binding to allosteric modulators. The protein is Glutamate receptor ionotropic, NMDA 1 of Mus musculus (Mouse).